The sequence spans 367 residues: Queuine tRNA-ribosyltransferase (367 aa).

Aspartate 91 functions as the Proton acceptor in the catalytic mechanism. Substrate-binding positions include 91 to 95 (DSGGF), aspartate 145, glutamine 188, and glycine 215. Aspartate 265 serves as the catalytic Nucleophile. An RNA binding; important for wobble base 34 recognition region spans residues 270–274 (TRVAR). 4 residues coordinate Zn(2+): cysteine 303, cysteine 305, cysteine 308, and histidine 334.

This sequence belongs to the queuine tRNA-ribosyltransferase family. As to quaternary structure, homodimer. Within each dimer, one monomer is responsible for RNA recognition and catalysis, while the other monomer binds to the replacement base PreQ1. Zn(2+) is required as a cofactor.

The catalysed reaction is 7-aminomethyl-7-carbaguanine + guanosine(34) in tRNA = 7-aminomethyl-7-carbaguanosine(34) in tRNA + guanine. It participates in tRNA modification; tRNA-queuosine biosynthesis. Functionally, catalyzes the base-exchange of a guanine (G) residue with the queuine precursor 7-aminomethyl-7-deazaguanine (PreQ1) at position 34 (anticodon wobble position) in tRNAs with GU(N) anticodons (tRNA-Asp, -Asn, -His and -Tyr). Catalysis occurs through a double-displacement mechanism. The nucleophile active site attacks the C1' of nucleotide 34 to detach the guanine base from the RNA, forming a covalent enzyme-RNA intermediate. The proton acceptor active site deprotonates the incoming PreQ1, allowing a nucleophilic attack on the C1' of the ribose to form the product. After dissociation, two additional enzymatic reactions on the tRNA convert PreQ1 to queuine (Q), resulting in the hypermodified nucleoside queuosine (7-(((4,5-cis-dihydroxy-2-cyclopenten-1-yl)amino)methyl)-7-deazaguanosine). The chain is Queuine tRNA-ribosyltransferase from Thermosipho africanus (strain TCF52B).